Consider the following 144-residue polypeptide: Large ribosomal subunit protein uL15 (144 aa).

The disordered stretch occupies residues 1-49; sequence MRLNTLSPAAGSKSAPKRVGRGIGSGLGKTAGRGHKGQKSRSGGGVRVG. The span at 21 to 31 shows a compositional bias: gly residues; it reads RGIGSGLGKTA.

Belongs to the universal ribosomal protein uL15 family. Part of the 50S ribosomal subunit.

In terms of biological role, binds to the 23S rRNA. The sequence is that of Large ribosomal subunit protein uL15 from Shewanella denitrificans (strain OS217 / ATCC BAA-1090 / DSM 15013).